Here is a 268-residue protein sequence, read N- to C-terminus: NH(3)-dependent NAD(+) synthetase (268 aa).

46–53 contributes to the ATP binding site; sequence GISGGQDS. Residue Asp52 coordinates Mg(2+). Arg140 contacts deamido-NAD(+). Thr160 is a binding site for ATP. Residue Glu165 participates in Mg(2+) binding. Lys173 and Asp180 together coordinate deamido-NAD(+). ATP-binding residues include Lys189 and Thr211. 260 to 261 is a deamido-NAD(+) binding site; that stretch reads HK.

It belongs to the NAD synthetase family. Homodimer.

It carries out the reaction deamido-NAD(+) + NH4(+) + ATP = AMP + diphosphate + NAD(+) + H(+). The protein operates within cofactor biosynthesis; NAD(+) biosynthesis; NAD(+) from deamido-NAD(+) (ammonia route): step 1/1. Functionally, catalyzes the ATP-dependent amidation of deamido-NAD to form NAD. Uses ammonia as a nitrogen source. In Buchnera aphidicola subsp. Schizaphis graminum (strain Sg), this protein is NH(3)-dependent NAD(+) synthetase.